The sequence spans 283 residues: (+)-O-methylkolavelool synthase (283 aa).

Residues glutamine 106, 129–130 (NA), and histidine 151 contribute to the S-adenosyl-L-methionine site.

Belongs to the methyltransferase superfamily.

It catalyses the reaction (+)-kolavelool + S-adenosyl-L-methionine = (+)-O-methylkolavelool + S-adenosyl-L-homocysteine + H(+). In terms of biological role, involved in the biosynthesis of the diterpene (+)-O-methylkolavelool. Catalyzes the transfer of a methyl group from S-adenosyl-L-methionine to the hydroxy group of (+)-kolavelool, forming (+)-O-methylkolavelool. In Herpetosiphon aurantiacus (strain ATCC 23779 / DSM 785 / 114-95), this protein is (+)-O-methylkolavelool synthase.